Reading from the N-terminus, the 252-residue chain is MLAKRIIPCLDVKEGRVVKGVNFIGLQDVGDPVEIAALYNDAGADEIVFLDITATHEGRKTIIDVVKKTASKVFIPLTVGGGISSVKDMYKLLRAGADKVSINSAAVRNPKLIEEGAQHFGSQCIVVAIDARKVAEGKWNVYVNGGRVDTGMDAIEWAKRVVMLGAGEILLTSMDADGTKNGYDLRLTEEISKSVSVPVIASGGCGHADHIIEVFQKTTVDAALAASIFHYGEATVQDVKRKLRNANVEVRL.

Residues D11 and D130 contribute to the active site.

The protein belongs to the HisA/HisF family. As to quaternary structure, heterodimer of HisH and HisF.

The protein resides in the cytoplasm. The enzyme catalyses 5-[(5-phospho-1-deoxy-D-ribulos-1-ylimino)methylamino]-1-(5-phospho-beta-D-ribosyl)imidazole-4-carboxamide + L-glutamine = D-erythro-1-(imidazol-4-yl)glycerol 3-phosphate + 5-amino-1-(5-phospho-beta-D-ribosyl)imidazole-4-carboxamide + L-glutamate + H(+). It functions in the pathway amino-acid biosynthesis; L-histidine biosynthesis; L-histidine from 5-phospho-alpha-D-ribose 1-diphosphate: step 5/9. Functionally, IGPS catalyzes the conversion of PRFAR and glutamine to IGP, AICAR and glutamate. The HisF subunit catalyzes the cyclization activity that produces IGP and AICAR from PRFAR using the ammonia provided by the HisH subunit. This Bacillus thuringiensis (strain Al Hakam) protein is Imidazole glycerol phosphate synthase subunit HisF.